The sequence spans 223 residues: ATP-dependent Clp protease proteolytic subunit 2 (223 aa).

A disordered region spans residues 1-40 (MHAGSGNDMDITRMTPTRLDDEPDAPEPETREDDNKTLNS). Residues 21–32 (DEPDAPEPETRE) are compositionally biased toward acidic residues. Catalysis depends on Ser124, which acts as the Nucleophile. His149 is a catalytic residue.

This sequence belongs to the peptidase S14 family. Fourteen ClpP subunits assemble into 2 heptameric rings which stack back to back to give a disk-like structure with a central cavity, resembling the structure of eukaryotic proteasomes.

The protein resides in the cytoplasm. It catalyses the reaction Hydrolysis of proteins to small peptides in the presence of ATP and magnesium. alpha-casein is the usual test substrate. In the absence of ATP, only oligopeptides shorter than five residues are hydrolyzed (such as succinyl-Leu-Tyr-|-NHMec, and Leu-Tyr-Leu-|-Tyr-Trp, in which cleavage of the -Tyr-|-Leu- and -Tyr-|-Trp bonds also occurs).. Functionally, cleaves peptides in various proteins in a process that requires ATP hydrolysis. Has a chymotrypsin-like activity. Plays a major role in the degradation of misfolded proteins. This is ATP-dependent Clp protease proteolytic subunit 2 from Gluconobacter oxydans (strain 621H) (Gluconobacter suboxydans).